We begin with the raw amino-acid sequence, 324 residues long: Olfactory receptor 5T17 (324 aa).

Topologically, residues 1 to 37 (MPRTPSYTNTKTTQVNNVTEITVFILLGFTDDVDMNI) are extracellular. N-linked (GlcNAc...) asparagine glycosylation is present at N17. A helical transmembrane segment spans residues 38–58 (FLFILFLAIYVVTLIGNLGLV). The Cytoplasmic portion of the chain corresponds to 59-66 (VLVIEDSR). The chain crosses the membrane as a helical span at residues 67-87 (LHNPMYYFLTVLSSLDACFSS). The Extracellular portion of the chain corresponds to 88–111 (VLTPKMLVNFLSKNKSISFAGCAT). N-linked (GlcNAc...) asparagine glycosylation is present at N101. C109 and C201 are joined by a disulfide. A helical membrane pass occupies residues 112–132 (QMLLFVTFGTTECFLLAAMAY). The Cytoplasmic segment spans residues 133 to 145 (DRYLAIYSPLLYA). A helical transmembrane segment spans residues 146–166 (VRMSPRVYVPLIIASYTGGIL). At 167 to 208 (HATIHTVATFSLSFCGSNEIRHVFCDIPPLLALSCSDTHLNQ) the chain is on the extracellular side. Residues 209 to 229 (LLLFYCAGSIELITILIVLVS) form a helical membrane-spanning segment. Residues 230–249 (YGFVLLAILKINSAEGRRKI) are Cytoplasmic-facing. Residues 250–270 (FSTCGAHLTGVSIFHGTILFM) traverse the membrane as a helical segment. Residues 271–283 (YVRPSSNYTLEQD) lie on the Extracellular side of the membrane. N277 carries an N-linked (GlcNAc...) asparagine glycan. The chain crosses the membrane as a helical span at residues 284–304 (MVVSTFYTIVIPMLNPIIYSL). Over 305-324 (RNKDVKEAMRKLLKRKLVHE) the chain is Cytoplasmic.

It belongs to the G-protein coupled receptor 1 family.

Its subcellular location is the cell membrane. Functionally, potential odorant receptor. The sequence is that of Olfactory receptor 5T17 from Mus musculus (Mouse).